The following is a 25-amino-acid chain: Dermaseptin-5.2TR (25 aa).

A Valine amide modification is found at valine 25.

As to expression, expressed by the skin glands.

It is found in the secreted. Has antimicrobial activity. In Phyllomedusa trinitatis (Trinidad leaf frog), this protein is Dermaseptin-5.2TR.